Here is a 218-residue protein sequence, read N- to C-terminus: Deoxyribose-phosphate aldolase (218 aa).

Residue D92 is the Proton donor/acceptor of the active site. K156 acts as the Schiff-base intermediate with acetaldehyde in catalysis. Catalysis depends on K185, which acts as the Proton donor/acceptor.

It belongs to the DeoC/FbaB aldolase family. DeoC type 1 subfamily.

The protein resides in the cytoplasm. It catalyses the reaction 2-deoxy-D-ribose 5-phosphate = D-glyceraldehyde 3-phosphate + acetaldehyde. The protein operates within carbohydrate degradation; 2-deoxy-D-ribose 1-phosphate degradation; D-glyceraldehyde 3-phosphate and acetaldehyde from 2-deoxy-alpha-D-ribose 1-phosphate: step 2/2. Catalyzes a reversible aldol reaction between acetaldehyde and D-glyceraldehyde 3-phosphate to generate 2-deoxy-D-ribose 5-phosphate. The polypeptide is Deoxyribose-phosphate aldolase (Desulfitobacterium hafniense (strain DSM 10664 / DCB-2)).